The chain runs to 315 residues: tRNA dimethylallyltransferase (315 aa).

10–17 (GPTGVGKT) is a binding site for ATP. 12–17 (TGVGKT) is a substrate binding site. The interval 35–38 (DSMQ) is interaction with substrate tRNA.

This sequence belongs to the IPP transferase family. In terms of assembly, monomer. The cofactor is Mg(2+).

It catalyses the reaction adenosine(37) in tRNA + dimethylallyl diphosphate = N(6)-dimethylallyladenosine(37) in tRNA + diphosphate. In terms of biological role, catalyzes the transfer of a dimethylallyl group onto the adenine at position 37 in tRNAs that read codons beginning with uridine, leading to the formation of N6-(dimethylallyl)adenosine (i(6)A). The sequence is that of tRNA dimethylallyltransferase from Thermodesulfovibrio yellowstonii (strain ATCC 51303 / DSM 11347 / YP87).